Reading from the N-terminus, the 579-residue chain is uncharacterized protein (579 aa).

This is an uncharacterized protein from Klebsiella pneumoniae.